A 105-amino-acid polypeptide reads, in one-letter code: Nitrogen fixation nifHD2 region GlnB-like protein 1 (105 aa).

This sequence belongs to the P(II) protein family.

Its function is as follows. Could be involved in the regulation of nitrogen fixation. This Methanosarcina barkeri protein is Nitrogen fixation nifHD2 region GlnB-like protein 1.